Consider the following 477-residue polypeptide: Trigger factor (477 aa).

The 86-residue stretch at 163-248 (ENLVIFDYKA…ITEVKKSEEV (86 aa)) folds into the PPIase FKBP-type domain. The segment covering 408 to 461 (KAKPSKKEISKEEAEKILKEHQKQDHNHEHDHNHDHDHPEEKKASKSTKIEKKP) has biased composition (basic and acidic residues). Positions 408 to 477 (KAKPSKKEIS…KPSTKKVSKK (70 aa)) are disordered.

This sequence belongs to the FKBP-type PPIase family. Tig subfamily.

It localises to the cytoplasm. It catalyses the reaction [protein]-peptidylproline (omega=180) = [protein]-peptidylproline (omega=0). In terms of biological role, involved in protein export. Acts as a chaperone by maintaining the newly synthesized protein in an open conformation. Functions as a peptidyl-prolyl cis-trans isomerase. The sequence is that of Trigger factor from Pelagibacter ubique (strain HTCC1062).